Consider the following 320-residue polypeptide: Ferrochelatase (320 aa).

Positions 194 and 275 each coordinate Fe cation.

This sequence belongs to the ferrochelatase family.

It localises to the cytoplasm. It carries out the reaction heme b + 2 H(+) = protoporphyrin IX + Fe(2+). It participates in porphyrin-containing compound metabolism; protoheme biosynthesis; protoheme from protoporphyrin-IX: step 1/1. Catalyzes the ferrous insertion into protoporphyrin IX. In Yersinia pestis bv. Antiqua (strain Antiqua), this protein is Ferrochelatase.